A 161-amino-acid polypeptide reads, in one-letter code: 6,7-dimethyl-8-ribityllumazine synthase (161 aa).

Residues W25, A57–E59, and V80–I82 each bind 5-amino-6-(D-ribitylamino)uracil. G85 to T86 is a binding site for (2S)-2-hydroxy-3-oxobutyl phosphate. The active-site Proton donor is the H88. F113 contacts 5-amino-6-(D-ribitylamino)uracil. A (2S)-2-hydroxy-3-oxobutyl phosphate-binding site is contributed by R127.

Belongs to the DMRL synthase family.

It catalyses the reaction (2S)-2-hydroxy-3-oxobutyl phosphate + 5-amino-6-(D-ribitylamino)uracil = 6,7-dimethyl-8-(1-D-ribityl)lumazine + phosphate + 2 H2O + H(+). The protein operates within cofactor biosynthesis; riboflavin biosynthesis; riboflavin from 2-hydroxy-3-oxobutyl phosphate and 5-amino-6-(D-ribitylamino)uracil: step 1/2. Catalyzes the formation of 6,7-dimethyl-8-ribityllumazine by condensation of 5-amino-6-(D-ribitylamino)uracil with 3,4-dihydroxy-2-butanone 4-phosphate. This is the penultimate step in the biosynthesis of riboflavin. The chain is 6,7-dimethyl-8-ribityllumazine synthase from Kineococcus radiotolerans (strain ATCC BAA-149 / DSM 14245 / SRS30216).